The primary structure comprises 204 residues: Arginine exporter protein ArgO (204 aa).

6 helical membrane passes run 1–21 (MFAV…PLGP), 37–57 (LMVA…GIFG), 67–87 (LLLG…GWGA), 111–131 (IIAT…DTFV), 147–167 (WFAL…ALLA), and 179–199 (VQRV…LQLA).

This sequence belongs to the LysE/ArgO transporter (TC 2.A.75) family.

Its subcellular location is the cell inner membrane. The enzyme catalyses L-arginine(in) = L-arginine(out). Functionally, involved in the export of arginine. Important to control the intracellular level of arginine and the correct balance between arginine and lysine. This Pectobacterium carotovorum subsp. carotovorum (strain PC1) protein is Arginine exporter protein ArgO.